The chain runs to 643 residues: Threonine--tRNA ligase (643 aa).

The TGS domain occupies 1–61 (MIKVSLKDGS…NEDVSLSICT (61 aa)). The catalytic stretch occupies residues 240-540 (DHNKLGRELK…LIEKYAGAFP (301 aa)). Residues C335, H386, and H517 each contribute to the Zn(2+) site.

This sequence belongs to the class-II aminoacyl-tRNA synthetase family. As to quaternary structure, homodimer. Zn(2+) serves as cofactor.

It is found in the cytoplasm. The catalysed reaction is tRNA(Thr) + L-threonine + ATP = L-threonyl-tRNA(Thr) + AMP + diphosphate + H(+). Its function is as follows. Catalyzes the attachment of threonine to tRNA(Thr) in a two-step reaction: L-threonine is first activated by ATP to form Thr-AMP and then transferred to the acceptor end of tRNA(Thr). Also edits incorrectly charged L-seryl-tRNA(Thr). This is Threonine--tRNA ligase from Clostridium botulinum (strain Alaska E43 / Type E3).